A 404-amino-acid polypeptide reads, in one-letter code: Cysteine desulfurase IscS (404 aa).

Residues 75-76 (AT), N155, Q183, and 203-205 (SAH) contribute to the pyridoxal 5'-phosphate site. Position 206 is an N6-(pyridoxal phosphate)lysine (K206). T243 is a binding site for pyridoxal 5'-phosphate. Catalysis depends on C328, which acts as the Cysteine persulfide intermediate. [2Fe-2S] cluster is bound at residue C328.

It belongs to the class-V pyridoxal-phosphate-dependent aminotransferase family. NifS/IscS subfamily. In terms of assembly, homodimer. Forms a heterotetramer with IscU, interacts with other sulfur acceptors. The cofactor is pyridoxal 5'-phosphate.

It is found in the cytoplasm. It carries out the reaction (sulfur carrier)-H + L-cysteine = (sulfur carrier)-SH + L-alanine. It functions in the pathway cofactor biosynthesis; iron-sulfur cluster biosynthesis. Its function is as follows. Master enzyme that delivers sulfur to a number of partners involved in Fe-S cluster assembly, tRNA modification or cofactor biosynthesis. Catalyzes the removal of elemental sulfur atoms from cysteine to produce alanine. Functions as a sulfur delivery protein for Fe-S cluster synthesis onto IscU, an Fe-S scaffold assembly protein, as well as other S acceptor proteins. The polypeptide is Cysteine desulfurase IscS (Buchnera aphidicola subsp. Baizongia pistaciae (strain Bp)).